The following is a 190-amino-acid chain: Threonylcarbamoyl-AMP synthase (190 aa).

A YrdC-like domain is found at Gly7–Gly190.

The protein belongs to the SUA5 family. TsaC subfamily.

The protein resides in the cytoplasm. It catalyses the reaction L-threonine + hydrogencarbonate + ATP = L-threonylcarbamoyladenylate + diphosphate + H2O. In terms of biological role, required for the formation of a threonylcarbamoyl group on adenosine at position 37 (t(6)A37) in tRNAs that read codons beginning with adenine. Catalyzes the conversion of L-threonine, HCO(3)(-)/CO(2) and ATP to give threonylcarbamoyl-AMP (TC-AMP) as the acyladenylate intermediate, with the release of diphosphate. The chain is Threonylcarbamoyl-AMP synthase from Escherichia coli O1:K1 / APEC.